A 282-amino-acid chain; its full sequence is 5'-adenylylsulfate reductase-like 2 (282 aa).

Positions 1–19 are cleaved as a signal peptide; it reads MRWWPALPLLLLAVAVAGA. The 140-residue stretch at 20–159 folds into the Thioredoxin domain; that stretch reads GDAAPVCTRP…LAAFYNDVSG (140 aa). Asparagine 134 carries an N-linked (GlcNAc...) asparagine glycan. A helical membrane pass occupies residues 205–225; the sequence is AASFVILRLLYLFYPKITAFV.

Its subcellular location is the membrane. This chain is 5'-adenylylsulfate reductase-like 2 (APRL2), found in Oryza sativa subsp. japonica (Rice).